Consider the following 160-residue polypeptide: Small ribosomal subunit protein uS17z (160 aa).

This sequence belongs to the universal ribosomal protein uS17 family.

The protein resides in the cytoplasm. This is Small ribosomal subunit protein uS17z (RPS11A) from Arabidopsis thaliana (Mouse-ear cress).